The primary structure comprises 385 residues: 1-deoxy-D-xylulose 5-phosphate reductoisomerase (385 aa).

Residues Thr13, Gly14, Ser15, Ile16, Asn40, and Asn122 each coordinate NADPH. Lys123 serves as a coordination point for 1-deoxy-D-xylulose 5-phosphate. Glu124 lines the NADPH pocket. Asp148 is a binding site for Mn(2+). 1-deoxy-D-xylulose 5-phosphate is bound by residues Ser149, Glu150, Ser177, and His200. Glu150 serves as a coordination point for Mn(2+). Gly206 serves as a coordination point for NADPH. 1-deoxy-D-xylulose 5-phosphate-binding residues include Ser213, Asn218, Lys219, and Glu222. Residue Glu222 coordinates Mn(2+).

The protein belongs to the DXR family. The cofactor is Mg(2+). Mn(2+) serves as cofactor.

It catalyses the reaction 2-C-methyl-D-erythritol 4-phosphate + NADP(+) = 1-deoxy-D-xylulose 5-phosphate + NADPH + H(+). The protein operates within isoprenoid biosynthesis; isopentenyl diphosphate biosynthesis via DXP pathway; isopentenyl diphosphate from 1-deoxy-D-xylulose 5-phosphate: step 1/6. Catalyzes the NADPH-dependent rearrangement and reduction of 1-deoxy-D-xylulose-5-phosphate (DXP) to 2-C-methyl-D-erythritol 4-phosphate (MEP). This Francisella tularensis subsp. holarctica (strain FTNF002-00 / FTA) protein is 1-deoxy-D-xylulose 5-phosphate reductoisomerase.